A 319-amino-acid chain; its full sequence is Cytochrome c biogenesis protein CcsA (319 aa).

The next 8 helical transmembrane spans lie at 9–29 (ILTH…LISL), 48–68 (TFFC…HFPL), 71–91 (LYES…VPYF), 98–118 (LSTI…SGLL), 143–163 (MILG…LLVI), 225–245 (IISL…VWAN), 258–275 (ETWA…LHTR), and 286–306 (AIVA…VNLL).

The protein belongs to the CcmF/CycK/Ccl1/NrfE/CcsA family. As to quaternary structure, may interact with Ccs1.

It localises to the plastid. The protein localises to the chloroplast thylakoid membrane. In terms of biological role, required during biogenesis of c-type cytochromes (cytochrome c6 and cytochrome f) at the step of heme attachment. In Eucalyptus globulus subsp. globulus (Tasmanian blue gum), this protein is Cytochrome c biogenesis protein CcsA.